Consider the following 874-residue polypeptide: Oxidation resistance protein 1 (874 aa).

The segment at 1–89 (MTKDKNSPGL…KTLDKKDGRR (89 aa)) is disordered. Basic and acidic residues predominate over residues 64 to 89 (RRSELKRFYTIDTGQKKTLDKKDGRR). Ser-91 bears the Phosphoserine mark. A LysM domain is found at 99-142 (IEYTVESRDSLNSIALKFDTTPNELVQLNKLFSRAVVTGQVLYV). Thr-119 is subject to Phosphothreonine. Residues 151–169 (VESSPSLSPVSPLSPTSSE) are compositionally biased toward low complexity. The segment at 151–194 (VESSPSLSPVSPLSPTSSEAEFDKTTNPDVHPTEATPSSTFTGI) is disordered. Phosphoserine occurs at positions 201, 202, and 204. The 68-residue stretch at 208–275 (EAFTEKFLKI…EEVMSAAMYK (68 aa)) folds into the GRAM domain. Residues Ser-294, Ser-334, and Ser-336 each carry the phosphoserine modification. Disordered stretches follow at residues 299 to 406 (CHSK…TNEV) and 431 to 537 (FQGI…ITSA). Thr-341 carries the phosphothreonine modification. A Phosphoserine modification is found at Ser-346. The segment covering 347 to 362 (PIREELVSSDELRQDK) has biased composition (basic and acidic residues). Residues 363–391 (SSGASSESVQTVNQAEVESLTVKSESTGT) are compositionally biased toward polar residues. The span at 452–466 (SFLHENSLHQEESQK) shows a compositional bias: basic and acidic residues. The residue at position 496 (Ser-496) is a Phosphoserine. A compositionally biased stretch (polar residues) spans 510–527 (HTMQQTKQQRENIQQVSQ). The tract at residues 551-578 (QRHRLHKFLCLRVGKPMRKTFVSQASAT) is mediates oxidative antimutator activity. Residues 713 to 874 (ELLLPDQIEK…IQDIEIWAFE (162 aa)) enclose the TLDc domain.

It belongs to the OXR1 family.

It is found in the mitochondrion. In terms of biological role, may be involved in protection from oxidative damage. The chain is Oxidation resistance protein 1 (OXR1) from Homo sapiens (Human).